Consider the following 432-residue polypeptide: Serine hydroxymethyltransferase (432 aa).

(6S)-5,6,7,8-tetrahydrofolate-binding positions include leucine 131 and 135-137; that span reads GHL. N6-(pyridoxal phosphate)lysine is present on lysine 240.

Belongs to the SHMT family. Homodimer. Requires pyridoxal 5'-phosphate as cofactor.

Its subcellular location is the cytoplasm. It carries out the reaction (6R)-5,10-methylene-5,6,7,8-tetrahydrofolate + glycine + H2O = (6S)-5,6,7,8-tetrahydrofolate + L-serine. It functions in the pathway one-carbon metabolism; tetrahydrofolate interconversion. Its pathway is amino-acid biosynthesis; glycine biosynthesis; glycine from L-serine: step 1/1. Its function is as follows. Catalyzes the reversible interconversion of serine and glycine with tetrahydrofolate (THF) serving as the one-carbon carrier. This reaction serves as the major source of one-carbon groups required for the biosynthesis of purines, thymidylate, methionine, and other important biomolecules. Also exhibits THF-independent aldolase activity toward beta-hydroxyamino acids, producing glycine and aldehydes, via a retro-aldol mechanism. This is Serine hydroxymethyltransferase from Acidiphilium cryptum (strain JF-5).